The sequence spans 479 residues: Pre-glycoprotein polyprotein GP complex (479 aa).

Glycine 2 is lipidated: N-myristoyl glycine; by host. The Extracellular portion of the chain corresponds to glycine 2–glutamate 17. The helical transmembrane segment at alanine 18–isoleucine 32 threads the bilayer. Position 33 (lysine 33) is a topological domain, cytoplasmic. Residues glycine 34–alanine 53 traverse the membrane as a helical segment. 2 consecutive stretches face the extracellular side: residues glycine 54 to serine 58 and phenylalanine 59 to aspartate 418. Cysteine 57 is a Zn(2+) binding site. 3 cysteine pairs are disulfide-bonded: cysteine 85–cysteine 221, cysteine 265–cysteine 278, and cysteine 287–cysteine 296. Residues asparagine 88, asparagine 125, asparagine 174, asparagine 202, and asparagine 214 are each glycosylated (N-linked (GlcNAc...) asparagine; by host). Residues asparagine 314, asparagine 351, asparagine 359, asparagine 376, and asparagine 381 are each glycosylated (N-linked (GlcNAc...) asparagine; by host). Cysteine 350 and cysteine 371 form a disulfide bridge. Residues leucine 419–proline 439 traverse the membrane as a helical segment. Over threonine 440–histidine 479 the chain is Cytoplasmic. Residues histidine 441, histidine 443, cysteine 449, histidine 453, cysteine 461, cysteine 463, and histidine 479 each coordinate Zn(2+).

This sequence belongs to the arenaviridae GPC protein family. As to quaternary structure, homotetramer; disulfide-linked. Homotetramer. GP2 homotetramers bind through ionic interactions with GP1 homotetramers to form the GP complex together with the stable signal peptide. The GP-C polyprotein interacts with the host protease MBTPS1/SKI-1 resulting in the polyprotein processing. Specific enzymatic cleavages in vivo yield mature proteins. GP-C polyprotein is cleaved in the endoplasmic reticulum by the host protease MBTPS1. Only cleaved glycoprotein is incorporated into virions. Post-translationally, the SSP remains stably associated with the GP complex following cleavage by signal peptidase and plays crucial roles in the trafficking of GP through the secretory pathway. In terms of processing, myristoylation is necessary for GP2-mediated fusion activity.

It localises to the virion membrane. The protein localises to the host endoplasmic reticulum membrane. It is found in the host Golgi apparatus membrane. The protein resides in the host cell membrane. Functionally, interacts with the host receptor. Mediates virus attachment to host TFRC. This attachment induces virion internalization predominantly through clathrin-mediated endocytosis. Its function is as follows. Class I viral fusion protein that directs fusion of viral and host endosomal membranes, leading to delivery of the nucleocapsid into the cytoplasm. Membrane fusion is mediated by irreversible conformational changes induced upon acidification in the endosome. Stable signal peptide (SSP): cleaved and functions as a signal peptide. In addition, it is also retained as the third component of the GP complex. The SSP is required for efficient glycoprotein expression, post-translational maturation cleavage of GP1 and GP2, glycoprotein transport to the cell surface plasma membrane, formation of infectious virus particles, and acid pH-dependent glycoprotein-mediated cell fusion. In Homo sapiens (Human), this protein is Pre-glycoprotein polyprotein GP complex.